Reading from the N-terminus, the 3164-residue chain is Genome polyprotein (3164 aa).

A Peptidase S30 domain is found at 219–362 (KMNDQGVDML…RTMSHKIVHF (144 aa)). Residues His270, Asp279, and Ser313 each act as for P1 proteinase activity in the active site. The Involved in interaction with stylet and aphid transmission signature appears at 414 to 417 (KITC). The Involved in virions binding and aphid transmission motif lies at 672–674 (PTK). A Peptidase C6 domain is found at 698–820 (MYIAKEGYCY…ESSLKHYRVG (123 aa)). Catalysis depends on for helper component proteinase activity residues Cys706 and His779. The Helicase ATP-binding domain maps to 1300 to 1452 (KIAHESDKDI…TQYPVSISTE (153 aa)). 1313-1320 (GAVGSGKS) contacts ATP. Residues 1402 to 1405 (DECH) carry the DEAH box motif. Residues 1471-1630 (DVISKGDNIL…GLPVITNNVS (160 aa)) enclose the Helicase C-terminal domain. Topologically, residues 1872–1889 (NTSDMSKFLKLKGKWNKT) are cytoplasmic. A helical membrane pass occupies residues 1890–1910 (LITRDVLVLCGVLGGGLWMVI). Topologically, residues 1911-1924 (QHLRSKMSEPVTHE) are lumenal. The Nuclear localization signal signature appears at 1965 to 1972 (KKGKSKGR). An O-(5'-phospho-RNA)-tyrosine modification is found at Tyr1987. The Peptidase C4 domain occupies 2117-2335 (SNSMFRGLRD…ISWGSLNIQA (219 aa)). Active-site for nuclear inclusion protein A activity residues include His2162, Asp2197, and Cys2267. The region spanning 2601–2725 (WVYCDADGSQ…SVHPEYEYIL (125 aa)) is the RdRp catalytic domain. The disordered stretch occupies residues 2884-2935 (GLTDEQKQAEKEKKEREKAEKERERQKQLALKKGKDVAQEEGKRDKEVNAGT). The segment covering 2887 to 2931 (DEQKQAEKEKKEREKAEKERERQKQLALKKGKDVAQEEGKRDKEV) has biased composition (basic and acidic residues). At Thr3147 the chain carries Phosphothreonine.

This sequence belongs to the potyviridae genome polyprotein family. As to quaternary structure, interacts with host eIF4E protein (via cap-binding region); this interaction mediates the translation of the VPg-viral RNA conjugates. Part of a complex that comprises VPg, RNA, host EIF4E and EIF4G; this interaction mediates the translation of the VPg-viral RNA conjugates. In terms of assembly, interacts, via N-terminal region, with host Sec24a protein in COPII-coated vesicles. This binding triggers the formation of host endoplasmic reticulum (ER)-derived viral vesicles involved in cell-to-cell viral movement. Post-translationally, VPg is uridylylated by the polymerase and is covalently attached to the 5'-end of the genomic RNA. This uridylylated form acts as a nucleotide-peptide primer for the polymerase. In terms of processing, potyviral RNA is expressed as two polyproteins which undergo post-translational proteolytic processing. Genome polyprotein is processed by NIa-pro, P1 and HC-pro proteinases resulting in the production of at least ten individual proteins. P3N-PIPO polyprotein is cleaved by P1 and HC-pro proteinases resulting in the production of three individual proteins. The P1 proteinase and the HC-pro cleave only their respective C-termini autocatalytically. 6K1 is essential for proper proteolytic separation of P3 from CI.

Its subcellular location is the host cytoplasm. The protein localises to the host nucleus. It localises to the host cytoplasmic vesicle. It is found in the host membrane. The protein resides in the virion. It catalyses the reaction RNA(n) + a ribonucleoside 5'-triphosphate = RNA(n+1) + diphosphate. The catalysed reaction is Hydrolyzes glutaminyl bonds, and activity is further restricted by preferences for the amino acids in P6 - P1' that vary with the species of potyvirus, e.g. Glu-Xaa-Xaa-Tyr-Xaa-Gln-|-(Ser or Gly) for the enzyme from tobacco etch virus. The natural substrate is the viral polyprotein, but other proteins and oligopeptides containing the appropriate consensus sequence are also cleaved.. The enzyme catalyses Hydrolyzes a Gly-|-Gly bond at its own C-terminus, commonly in the sequence -Tyr-Xaa-Val-Gly-|-Gly, in the processing of the potyviral polyprotein.. Its function is as follows. Cysteine protease that cleaves a Gly-Gly dipeptide at its own C-terminus. Required for aphid transmission and also has proteolytic activity. Interacts with virions and aphid stylets. Acts as a suppressor of RNA-mediated gene silencing, also known as post-transcriptional gene silencing (PTGS), a mechanism of plant viral defense that limits the accumulation of viral RNAs. May have RNA-binding activity. Functionally, has helicase activity. It may be involved in replication. In terms of biological role, indispensable for virus replication. Reduces the abundance of host transcripts related to jasmonic acid biosynthesis therefore altering the host defenses. In order to increase its own stability, decreases host protein degradation pathways. Responsible for the formation of peripheral motile host endoplasmic reticulum (ER)-derived viral vesicles called 'viral factories', seat of the viral RNA (vRNA) replication and carrying vRNA to plasmodesmata for delivery into adjacent non-infected cells; this process relies on host Sec24a-binding. Its function is as follows. Mediates the cap-independent, EIF4E-dependent translation of viral genomic RNAs. Binds to the cap-binding site of host EIF4E and thus interferes with the host EIF4E-dependent mRNA export and translation. VPg-RNA directly binds EIF4E and is a template for transcription. Also forms trimeric complexes with EIF4E-EIF4G, which are templates for translation. Functionally, has RNA-binding and proteolytic activities. In terms of biological role, RNA-dependent RNA polymerase that ensures transcription and replication of viral RNA (vRNA). Involved in aphid transmission, cell-to-cell and systemis movement, encapsidation of the viral RNA and in the regulation of viral RNA amplification. The sequence is that of Genome polyprotein from Turnip mosaic virus (strain Japanese) (TuMV).